The sequence spans 498 residues: NADPH:adrenodoxin oxidoreductase, mitochondrial (498 aa).

A mitochondrion-targeting transit peptide spans 1-37 (MSTHKAALCKVQILKLFLISARCVRITRFYGVCGLST). FAD is bound by residues Ala54, Glu75, Leu83, and Val119. Residues 190–193 (QGNV), 234–235 (RR), and Glu246 contribute to the NADP(+) site. FAD is bound by residues Trp404 and 411-413 (GVI). Gly411 contacts NADP(+). Residues 469–488 (DSEETRRGETRGKPREKMLD) show a composition bias toward basic and acidic residues. A disordered region spans residues 469-489 (DSEETRRGETRGKPREKMLDV).

It belongs to the ferredoxin--NADP reductase type 1 family. It depends on FAD as a cofactor.

It localises to the mitochondrion inner membrane. It carries out the reaction 2 reduced [adrenodoxin] + NADP(+) + H(+) = 2 oxidized [adrenodoxin] + NADPH. Its pathway is steroid metabolism; cholesterol metabolism. In terms of biological role, serves as the first electron transfer protein in all the mitochondrial P450 systems including cholesterol side chain cleavage in all steroidogenic tissues, steroid 11-beta hydroxylation in the adrenal cortex, 25-OH-vitamin D3-24 hydroxylation in the kidney, and sterol C-27 hydroxylation in the liver. In Salvelinus fontinalis (Brook trout), this protein is NADPH:adrenodoxin oxidoreductase, mitochondrial (fdxr).